A 325-amino-acid chain; its full sequence is Aldo-keto reductase family 1 member A1 (325 aa).

Ala2 bears the N-acetylalanine mark. Ser4 bears the Phosphoserine mark. Residues 11 to 20 (GQKMPLIGLG), Thr21, and Trp22 contribute to the NADP(+) site. At Ser38 the chain carries Phosphoserine. Asp45 is a binding site for NADP(+). The active-site Proton donor is Tyr50. N6-acetyllysine; alternate is present on Lys127. Lys127 carries the N6-succinyllysine; alternate modification. Position 145 is an N6-succinyllysine (Lys145). The NADP(+) site is built by Ser162, Asn163, Ser211, Leu213, Ser215, Ser216, Lys263, Ser264, Ile265, Thr266, Arg269, Gln272, and Asn273. Ser211 is modified (phosphoserine).

It belongs to the aldo/keto reductase family. Monomer. Widely expressed. Highly expressed in kidney, salivary gland and liver. Detected in trachea, stomach, brain, lung, prostate, placenta, mammary gland, small intestine and lung.

It is found in the cytoplasm. It localises to the cytosol. Its subcellular location is the apical cell membrane. It catalyses the reaction a primary alcohol + NADP(+) = an aldehyde + NADPH + H(+). The catalysed reaction is allyl alcohol + NADP(+) = acrolein + NADPH + H(+). It carries out the reaction glycerol + NADP(+) = D-glyceraldehyde + NADPH + H(+). The enzyme catalyses glycerol + NADP(+) = L-glyceraldehyde + NADPH + H(+). It catalyses the reaction hydroxyacetone + NADP(+) = methylglyoxal + NADPH + H(+). The catalysed reaction is a 4-hydroxynonen-1-ol + NADP(+) = a 4-hydroxynonenal + NADPH + H(+). It carries out the reaction 3-deoxyfructose + NADP(+) = 3-deoxyglucosone + NADPH + H(+). The enzyme catalyses L-gulonate + NADP(+) = aldehydo-D-glucuronate + NADPH + H(+). It catalyses the reaction L-gulono-1,4-lactone + NADP(+) = D-glucurono-3,6-lactone + NADPH + H(+). The catalysed reaction is pyridine 3-methanol + NADP(+) = pyridine-3-carbaldehyde + NADPH + H(+). It carries out the reaction S-nitroso-CoA + NADPH + H(+) = sulfinamide-CoA + NADP(+). The enzyme catalyses S-nitrosoglutathione + NADPH + H(+) = S-(hydroxysulfenamide)glutathione + NADP(+). Functionally, catalyzes the NADPH-dependent reduction of a wide variety of carbonyl-containing compounds to their corresponding alcohols. Displays enzymatic activity towards endogenous metabolites such as aromatic and aliphatic aldehydes, ketones, monosaccharides and bile acids, with a preference for negatively charged substrates, such as glucuronate and succinic semialdehyde. Functions as a detoxifiying enzyme by reducing a range of toxic aldehydes. Reduces methylglyoxal and 3-deoxyglucosone, which are present at elevated levels under hyperglycemic conditions and are cytotoxic. Involved also in the detoxification of lipid-derived aldehydes like acrolein. Plays a role in the activation of procarcinogens, such as polycyclic aromatic hydrocarbon trans-dihydrodiols, and in the metabolism of various xenobiotics and drugs, including the anthracyclines doxorubicin (DOX) and daunorubicin (DAUN). Also acts as an inhibitor of protein S-nitrosylation by mediating degradation of S-nitroso-coenzyme A (S-nitroso-CoA), a cofactor required to S-nitrosylate proteins. S-nitroso-CoA reductase activity is involved in reprogramming intermediary metabolism in renal proximal tubules, notably by inhibiting protein S-nitrosylation of isoform 2 of PKM (PKM2). Also acts as a S-nitroso-glutathione reductase by catalyzing the NADPH-dependent reduction of S-nitrosoglutathione. Displays no reductase activity towards retinoids. This is Aldo-keto reductase family 1 member A1 (AKR1A1) from Homo sapiens (Human).